The chain runs to 262 residues: Phosphonates import ATP-binding protein PhnC (262 aa).

In terms of domain architecture, ABC transporter spans Ile-5–Asn-253. An ATP-binding site is contributed by Gly-37–Ser-44.

It belongs to the ABC transporter superfamily. Phosphonates importer (TC 3.A.1.9.1) family. The complex is composed of two ATP-binding proteins (PhnC), two transmembrane proteins (PhnE) and a solute-binding protein (PhnD).

The protein resides in the cell inner membrane. It catalyses the reaction phosphonate(out) + ATP + H2O = phosphonate(in) + ADP + phosphate + H(+). In terms of biological role, part of the ABC transporter complex PhnCDE involved in phosphonates import. Responsible for energy coupling to the transport system. In Shigella flexneri serotype 5b (strain 8401), this protein is Phosphonates import ATP-binding protein PhnC.